A 186-amino-acid polypeptide reads, in one-letter code: ATP synthase subunit delta (186 aa).

Belongs to the ATPase delta chain family. As to quaternary structure, F-type ATPases have 2 components, F(1) - the catalytic core - and F(0) - the membrane proton channel. F(1) has five subunits: alpha(3), beta(3), gamma(1), delta(1), epsilon(1). CF(0) has four main subunits: a(1), b(1), b'(1) and c(10-14). The alpha and beta chains form an alternating ring which encloses part of the gamma chain. F(1) is attached to F(0) by a central stalk formed by the gamma and epsilon chains, while a peripheral stalk is formed by the delta, b and b' chains.

It is found in the cell inner membrane. Its function is as follows. F(1)F(0) ATP synthase produces ATP from ADP in the presence of a proton or sodium gradient. F-type ATPases consist of two structural domains, F(1) containing the extramembraneous catalytic core and F(0) containing the membrane proton channel, linked together by a central stalk and a peripheral stalk. During catalysis, ATP synthesis in the catalytic domain of F(1) is coupled via a rotary mechanism of the central stalk subunits to proton translocation. In terms of biological role, this protein is part of the stalk that links CF(0) to CF(1). It either transmits conformational changes from CF(0) to CF(1) or is implicated in proton conduction. The protein is ATP synthase subunit delta of Cereibacter sphaeroides (strain ATCC 17029 / ATH 2.4.9) (Rhodobacter sphaeroides).